The primary structure comprises 315 residues: Taste receptor type 2 member 3 (315 aa).

Residues 1–5 (MGLTE) lie on the Extracellular side of the membrane. A helical transmembrane segment spans residues 6–26 (GVFLILSGTQFTLGILVNCFI). Residues 27–41 (ELVNGSSWFKTKRMS) are Cytoplasmic-facing. Residues 42–62 (LSDFIITTLALLRIILLCIIL) form a helical membrane-spanning segment. Residues 63–93 (TDSFLIEFSPNTHDSGIIMQIIDVSWTFTNH) are Extracellular-facing. The chain crosses the membrane as a helical span at residues 94 to 114 (LSIWLATCLGVLYCLKIASFS). Residues 115–127 (HPTFLWLKWRVSR) are Cytoplasmic-facing. Residues 128–148 (VMVWMLLGALLLSCGSTASLI) traverse the membrane as a helical segment. Residues 149–185 (NEFKLYSVFRGIEATRNVTEHFRKKRSEYYLIHVLGT) lie on the Extracellular side of the membrane. N-linked (GlcNAc...) asparagine glycosylation is present at N165. A helical membrane pass occupies residues 186–206 (LWYLPPLIVSLASYSLLIFSL). Topologically, residues 207–233 (GRHTRQMLQNGTSSRDPTTEAHKRAIR) are cytoplasmic. A helical membrane pass occupies residues 234–254 (IILSFFFLFLLYFLAFLIASF). At 255-265 (GNFLPKTKMAK) the chain is on the extracellular side. A helical transmembrane segment spans residues 266–286 (MIGEVMTMFYPAGHSFILILG). The Cytoplasmic segment spans residues 287–315 (NSKLKQTFVVMLRCESGHLKPGSKGPIFS).

It belongs to the G-protein coupled receptor T2R family.

The protein resides in the membrane. Its function is as follows. Gustducin-coupled receptor implicated in the perception of bitter compounds in the oral cavity and the gastrointestinal tract. Signals through PLCB2 and the calcium-regulated cation channel TRPM5. The polypeptide is Taste receptor type 2 member 3 (TAS2R3) (Gorilla gorilla gorilla (Western lowland gorilla)).